The primary structure comprises 449 residues: Glutamyl-tRNA reductase (449 aa).

Substrate contacts are provided by residues 49–52 (TCNR), Ser109, 114–116 (ETQ), and Gln120. Cys50 acts as the Nucleophile in catalysis. 189 to 194 (GAGKMS) provides a ligand contact to NADP(+). The interval 427-449 (NFTHPREEMEESDEKRSYCGESR) is disordered.

The protein belongs to the glutamyl-tRNA reductase family. In terms of assembly, homodimer.

The enzyme catalyses (S)-4-amino-5-oxopentanoate + tRNA(Glu) + NADP(+) = L-glutamyl-tRNA(Glu) + NADPH + H(+). It participates in porphyrin-containing compound metabolism; protoporphyrin-IX biosynthesis; 5-aminolevulinate from L-glutamyl-tRNA(Glu): step 1/2. Its function is as follows. Catalyzes the NADPH-dependent reduction of glutamyl-tRNA(Glu) to glutamate 1-semialdehyde (GSA). This Carboxydothermus hydrogenoformans (strain ATCC BAA-161 / DSM 6008 / Z-2901) protein is Glutamyl-tRNA reductase.